The sequence spans 398 residues: Phospholipase C (398 aa).

The signal sequence occupies residues 1–28; that stretch reads MKRKICKALICATLATSLWAGASTKVYA. Positions 29, 39, 84, 96, 154, 158, 164, 176, and 180 each coordinate Zn(2+). The 250-residue stretch at 29–278 folds into the Zn-dependent PLC domain; the sequence is WDGKIDGTGT…HDVSEGNDPS (250 aa). Residues 275 to 283 form a linker region; that stretch reads NDPSVGKNV. In terms of domain architecture, PLAT spans 284–398; that stretch reads KELVAYISTS…ISGNSTYNIK (115 aa). Asp-297, Gly-299, Thr-300, Asp-301, Asp-321, Asn-322, Gly-324, Asn-325, Asp-326, Asp-364, and Ala-365 together coordinate Ca(2+).

It belongs to the bacterial zinc-metallophospholipase C family. Ca(2+) serves as cofactor. Requires Zn(2+) as cofactor.

It localises to the secreted. It carries out the reaction a 1,2-diacyl-sn-glycero-3-phosphocholine + H2O = phosphocholine + a 1,2-diacyl-sn-glycerol + H(+). Bacterial hemolysins are exotoxins that attack blood cell membranes and cause cell rupture. Constitutes an essential virulence factor in gas gangrene. Binds to eukaryotic membranes where it hydrolyzes both phosphatidylcholine and sphingomyelin. The diacylglycerol produced can activate both the arachidonic acid pathway, leading to modulation of the inflammatory response cascade and thrombosis, and protein kinase C, leading to activation of eukaryotic phospholipases and further membrane damage. Acts on human and mouse erythrocytes, but not on rabbit or horse erythrocytes. This Clostridium perfringens (strain 13 / Type A) protein is Phospholipase C (plc).